Reading from the N-terminus, the 490-residue chain is Glutamyl-tRNA(Gln) amidotransferase subunit A (490 aa).

Catalysis depends on charge relay system residues K76 and S151. S175 (acyl-ester intermediate) is an active-site residue.

This sequence belongs to the amidase family. GatA subfamily. As to quaternary structure, heterotrimer of A, B and C subunits.

The enzyme catalyses L-glutamyl-tRNA(Gln) + L-glutamine + ATP + H2O = L-glutaminyl-tRNA(Gln) + L-glutamate + ADP + phosphate + H(+). Allows the formation of correctly charged Gln-tRNA(Gln) through the transamidation of misacylated Glu-tRNA(Gln) in organisms which lack glutaminyl-tRNA synthetase. The reaction takes place in the presence of glutamine and ATP through an activated gamma-phospho-Glu-tRNA(Gln). This is Glutamyl-tRNA(Gln) amidotransferase subunit A from Aromatoleum aromaticum (strain DSM 19018 / LMG 30748 / EbN1) (Azoarcus sp. (strain EbN1)).